We begin with the raw amino-acid sequence, 391 residues long: Pyruvate dehydrogenase E1 component subunit alpha, testis-specific form, mitochondrial (391 aa).

A mitochondrion-targeting transit peptide spans 1 to 30; the sequence is MRKMLATVLSQVFSGMVQKPALRGLLSSLK. Pyruvate is bound by residues His93, Tyr119, Arg120, Ala158, Gly166, Val168, Asp197, Gly198, Ala199, Asn226, and Tyr228. Thiamine diphosphate contacts are provided by Tyr119 and Arg120. 6 residues coordinate thiamine diphosphate: Gly166, Val168, Asp197, Gly198, Ala199, and Asn226. Asp197 contributes to the Mg(2+) binding site. The Mg(2+) site is built by Asn226 and Tyr228. Position 293 (His293) interacts with thiamine diphosphate. Ser294 and Ser296 each carry phosphoserine. Ser301 is modified (phosphoserine; by PDK3).

As to quaternary structure, heterotetramer of two PDHA2 and two PDHB subunits. The heterotetramer interacts with DLAT, and is part of the multimeric pyruvate dehydrogenase complex that contains multiple copies of pyruvate dehydrogenase (E1), dihydrolipoamide acetyltransferase (DLAT, E2) and lipoamide dehydrogenase (DLD, E3). These subunits are bound to an inner core composed of about 48 DLAT and 12 PDHX molecules. It depends on thiamine diphosphate as a cofactor. Requires Mg(2+) as cofactor. In terms of tissue distribution, testis.

Its subcellular location is the mitochondrion matrix. The enzyme catalyses N(6)-[(R)-lipoyl]-L-lysyl-[protein] + pyruvate + H(+) = N(6)-[(R)-S(8)-acetyldihydrolipoyl]-L-lysyl-[protein] + CO2. With respect to regulation, pyruvate dehydrogenase activity is inhibited by phosphorylation of PDHA2; it is reactivated by dephosphorylation. Its function is as follows. The pyruvate dehydrogenase complex catalyzes the overall conversion of pyruvate to acetyl-CoA and CO(2), and thereby links the glycolytic pathway to the tricarboxylic cycle. This is Pyruvate dehydrogenase E1 component subunit alpha, testis-specific form, mitochondrial (Pdha2) from Rattus norvegicus (Rat).